The primary structure comprises 456 residues: Transforming growth factor beta-1-induced transcript 1 protein (456 aa).

M1 is modified (N-acetylmethionine). The disordered stretch occupies residues 1-79 (MEDLDALLSD…ATPPFSSSCG (79 aa)). The tract at residues 1 to 195 (MEDLDALLSD…DTPSPPGPTS (195 aa)) is transcription activation. Residues 1 to 235 (MEDLDALLSD…CNKPIAGQVV (235 aa)) form an interaction with PTK2B/PYK2 region. Positions 3–15 (DLDALLSDLETTT) match the LD motif 1 motif. T33 carries the phosphothreonine modification. Position 55 is a phosphotyrosine (Y55). Residue S63 is modified to Phosphoserine. An interaction with PTK2/FAK1 region spans residues 78-131 (CGVLGTGLCELDRLLQELNATQFNITDEIMSQFPSSKETAGEQKEDQSEDKKRP). An LD motif 2 motif is present at residues 87-99 (ELDRLLQELNATQ). Residues 109 to 146 (QFPSSKETAGEQKEDQSEDKKRPSPPPSPSPVLPKPSA) form a disordered region. A compositionally biased stretch (basic and acidic residues) spans 116-130 (TAGEQKEDQSEDKKR). Phosphoserine is present on residues S132, S136, S138, S159, S181, and S189. The segment covering 132–142 (SPPPSPSPVLP) has biased composition (pro residues). Residues 152-163 (ELDRLMASLSDF) carry the LD motif 3 motif. The tract at residues 166 to 200 (QNHLPASGPTPPPVPSSMSEDTPSPPGPTSKGSLD) is disordered. Positions 198–210 (SLDTMLGLLQSDL) match the LD motif 4 motif. LIM zinc-binding domains lie at 221-280 (GLCG…RFSP), 281-338 (RCGL…QLFA), 339-398 (PRCQ…RRGS), and 399-456 (LCAT…KLFG). S398 carries the post-translational modification Phosphoserine. T402 carries the phosphothreonine modification.

This sequence belongs to the paxillin family. As to quaternary structure, homooligomer. Interacts with CRIP2, HSPB1, ILK, LIMS1, LIMS2, NCK2, NUDT16L1, PAK, PPARG, PTPN12, TCF3, TCF7L2 and VCL. Forms a complex with GIT1 and ARHGEF7. Interacts with AR/androgen receptor in a ligand-dependent manner. Interacts with CSK, LYN, MAPK15, NR3C1, PPARG, PTK2/FAK1, PTK2B/PYK2, SLC6A3, SLC6A4, SMAD3, SRC and talin. Interacts (via LIM zinc-binding domain 2) with CBLC (via RING-type zinc finger); the interaction is direct and enhances CBLC E3 ubiquitin-protein ligase activity. In terms of processing, phosphorylated by gonadotropin-releasing hormone-activated SRC.

The protein resides in the cell junction. The protein localises to the focal adhesion. It is found in the nucleus matrix. It localises to the cytoplasm. Its subcellular location is the cytoskeleton. Functions as a molecular adapter coordinating multiple protein-protein interactions at the focal adhesion complex and in the nucleus. Links various intracellular signaling modules to plasma membrane receptors and regulates the Wnt and TGFB signaling pathways. May also regulate SLC6A3 and SLC6A4 targeting to the plasma membrane hence regulating their activity. In the nucleus, functions as a nuclear receptor coactivator regulating glucocorticoid, androgen, mineralocorticoid and progesterone receptor transcriptional activity. May play a role in the processes of cell growth, proliferation, migration, differentiation and senescence. May have a zinc-dependent DNA-binding activity. The chain is Transforming growth factor beta-1-induced transcript 1 protein (TGFB1I1) from Bos taurus (Bovine).